The chain runs to 381 residues: Arrestin homolog (381 aa).

Belongs to the arrestin family.

The sequence is that of Arrestin homolog from Heliothis virescens (Tobacco budworm moth).